The following is a 362-amino-acid chain: Aminomethyltransferase (362 aa).

Belongs to the GcvT family. In terms of assembly, the glycine cleavage system is composed of four proteins: P, T, L and H.

The catalysed reaction is N(6)-[(R)-S(8)-aminomethyldihydrolipoyl]-L-lysyl-[protein] + (6S)-5,6,7,8-tetrahydrofolate = N(6)-[(R)-dihydrolipoyl]-L-lysyl-[protein] + (6R)-5,10-methylene-5,6,7,8-tetrahydrofolate + NH4(+). Its function is as follows. The glycine cleavage system catalyzes the degradation of glycine. The polypeptide is Aminomethyltransferase (Bacillus subtilis (strain 168)).